Reading from the N-terminus, the 325-residue chain is Lactonase drp35 (325 aa).

10 residues coordinate Ca(2+): glutamate 46, threonine 108, glycine 110, aspartate 128, threonine 131, tyrosine 133, aspartate 136, asparagine 183, aspartate 234, and serine 235. Aspartate 234 functions as the Proton donor in the catalytic mechanism.

It belongs to the SMP-30/CGR1 family. Requires Ca(2+) as cofactor.

It localises to the cytoplasm. Its function is as follows. Exhibits lactonase activity. Acts in cells with perturbed membrane integrity and is possibly related to the membrane homeostasis. This is Lactonase drp35 (drp35) from Staphylococcus epidermidis (strain ATCC 35984 / DSM 28319 / BCRC 17069 / CCUG 31568 / BM 3577 / RP62A).